The chain runs to 348 residues: MNKTDELRTARIGSLITPPSLAAEHPVSPAIADNVTAARKRIACILTGEDHRLLVVIGPCSLHDPKAALEYAERLNALRRRYEDRLEIVMRAYFEKPRTVVGWKGLISDPDLDGSYDVNRGIGIARQLLIDINALGLPTATEFLDMVIGQFIADLISWGAIGARTTESQIHREMASALSCPVGFKNGTDGNVQIAVDAIRAARASHMFLSPDKLGQMTIYQTSGNPHGHVILRGGKQPNYHASDVAAAAESLSAFNLPQQLVIDFSHGNCLKQHRRQMDVAAEVAEQIKAGSQAVAGVMIESFLEEGNQKVVSGEPLVYGKSITDPCLGWQESEKVLALLAEAVSHRL.

Belongs to the class-I DAHP synthase family.

The catalysed reaction is D-erythrose 4-phosphate + phosphoenolpyruvate + H2O = 7-phospho-2-dehydro-3-deoxy-D-arabino-heptonate + phosphate. Its pathway is metabolic intermediate biosynthesis; chorismate biosynthesis; chorismate from D-erythrose 4-phosphate and phosphoenolpyruvate: step 1/7. Stereospecific condensation of phosphoenolpyruvate (PEP) and D-erythrose-4-phosphate (E4P) giving rise to 3-deoxy-D-arabino-heptulosonate-7-phosphate (DAHP). This Enterobacter agglomerans (Erwinia herbicola) protein is Phospho-2-dehydro-3-deoxyheptonate aldolase, Trp-sensitive (aroH).